We begin with the raw amino-acid sequence, 968 residues long: MPFTLGQRWISDTESELGLGTVVAVDARTVTLLFPSTGENRLYARSDSPVTRVMFNPGDTITSHDGWQMQVEEVKEENGLLTYIGTRLDTEESGVALREVFLDSKLVFSKPQDRLFAGQIDRMDRFALRYRARKYSSEQFRMPYSGLRGQRTSLIPHQLNIAHDVGRRHAPRVLLADEVGLGKTIEAGMILHQQLLSGAAERVLIIVPETLQHQWLVEMLRRFNLRFALFDDERYAEAQHDAYNPFDTEQLVICSLDFARRSKQRLEHLCEAEWDLLVVDEAHHLVWSEDAPSREYQAIEQLAEHVPGVLLLTATPEQLGMESHFARLRLLDPNRFHDFAQFVEEQKNYRPVADAVAMLLAGNKLSNDELNMLGEMIGEQDIEPLLQAANSDSEDAQSARQELVSMLMDRHGTSRVLFRNTRNGVKGFPKRELHTIKLPLPTQYQTAIKVSGIMGARKSAEDRARDMLYPERIYQEFEGDNATWWNFDPRVEWLMGYLTSHRSQKVLVICAKAATALQLEQVLREREGIRAAVFHEGMSIIERDRAAAWFAEEDTGAQVLLCSEIGSEGRNFQFASHMVMFDLPFNPDLLEQRIGRLDRIGQAHDIQIHVPYLEKTAQSVLVRWYHEGLDAFEHTCPTGRTIYDSVYNDLINYLASPDQTEGFDDLIKNCREQHEALKAQLEQGRDRLLEIHSNGGEKAQALAESIEEQDDDTNLIAFAMNLFDIIGINQDDRGDNMIVLTPSDHMLVPDFPGLSEDGITITFDREVALAREDTQFITWEHPLIRNGLDLILSGDTGSSTISLLKNKALPVGTLLVELIYVVEAQAPKQLQLNRFLPPTPVRMLLDKNGNNLAAQVEFETFNRQLNAVNRHTGSKLVNAVQQDVHAILQLGEAQIEKSARALIDAARNEADEKLSAELSRLEALRAVNPNIRDDELTAIESNRQQVMESLDQAGWRLDALRLIVVTHQ.

In terms of domain architecture, Helicase ATP-binding spans 164 to 334; it reads DVGRRHAPRV…FARLRLLDPN (171 aa). Position 177–184 (177–184) interacts with ATP; it reads DEVGLGKT. The short motif at 280–283 is the DEAH box element; sequence DEAH. The Helicase C-terminal domain maps to 490-662; the sequence is RVEWLMGYLT…YLASPDQTEG (173 aa).

Belongs to the SNF2/RAD54 helicase family. RapA subfamily. In terms of assembly, interacts with the RNAP. Has a higher affinity for the core RNAP than for the holoenzyme. Its ATPase activity is stimulated by binding to RNAP.

Its function is as follows. Transcription regulator that activates transcription by stimulating RNA polymerase (RNAP) recycling in case of stress conditions such as supercoiled DNA or high salt concentrations. Probably acts by releasing the RNAP, when it is trapped or immobilized on tightly supercoiled DNA. Does not activate transcription on linear DNA. Probably not involved in DNA repair. This chain is RNA polymerase-associated protein RapA, found in Escherichia coli O1:K1 / APEC.